The following is a 357-amino-acid chain: NAD-dependent protein deacetylase HST2 (357 aa).

Ser-2 is modified (N-acetylserine). Residues 5–284 enclose the Deacetylase sirtuin-type domain; it reads TASTEMSVRK…EQLVEELGWQ (280 aa). Residues 32-52 and 115-118 contribute to the NAD(+) site; these read GAGISTSCGIPDFRSPGTGLY and QNID. The active-site Proton acceptor is His-135. The Zn(2+) site is built by Cys-143, Cys-146, Cys-170, and Cys-173. Residues 223–225, 248–250, and Ser-270 each bind NAD(+); these read GTS and NLE. Residues 317–329 are compositionally biased toward basic and acidic residues; it reads LDQSEHESADKKD. Residues 317–357 are disordered; it reads LDQSEHESADKKDKKLQRLNGHDSDEDGASNSSSSQKAAKE. The residue at position 340 (Ser-340) is a Phosphoserine.

Belongs to the sirtuin family. Class I subfamily. In terms of assembly, homotrimer. Monomer. Homotrimeric in its unliganded state. Undergoes a trimer-monomer transition upon acetyl-lysine substrate binding. Zn(2+) serves as cofactor.

Its subcellular location is the cytoplasm. The protein resides in the nucleus. The enzyme catalyses N(6)-acetyl-L-lysyl-[protein] + NAD(+) + H2O = 2''-O-acetyl-ADP-D-ribose + nicotinamide + L-lysyl-[protein]. With respect to regulation, inhibited by ADP-ribose and nicotinamide. NAD-dependent histone deacetylase that is involved in nuclear silencing events. Derepresses subtelomeric silencing and increases repression in nucleolar (rDNA) silencing. Its function is negatively regulated by active nuclear export. The protein is NAD-dependent protein deacetylase HST2 (HST2) of Saccharomyces cerevisiae (strain ATCC 204508 / S288c) (Baker's yeast).